A 219-amino-acid chain; its full sequence is Carboxypeptidase Y inhibitor (219 aa).

Met1 is modified (N-acetylmethionine).

The protein belongs to the phosphatidylethanolamine-binding protein family. In terms of assembly, monomer.

It is found in the cytoplasm. Specific and potent inhibitor of carboxypeptidase Y. The protein is Carboxypeptidase Y inhibitor (TFS1) of Saccharomyces cerevisiae (strain ATCC 204508 / S288c) (Baker's yeast).